A 156-amino-acid chain; its full sequence is MDITIIAVGNKMPDWVNEGFSDYATRFNAEINMQLKEIPLQKRGDDKQIAAARSKESAQILAALAGKDYVVTLDIAGKNYRSEQLAARLQFWQENARSLALIIGGPEGLSAEVKNRAQESWSLGALTLPHPLVRIIVAEALYRAWSINHHHPYHRA.

S-adenosyl-L-methionine is bound by residues leucine 73, glycine 104, and 123 to 128 (LGALTL).

This sequence belongs to the RNA methyltransferase RlmH family. Homodimer.

Its subcellular location is the cytoplasm. It carries out the reaction pseudouridine(1915) in 23S rRNA + S-adenosyl-L-methionine = N(3)-methylpseudouridine(1915) in 23S rRNA + S-adenosyl-L-homocysteine + H(+). In terms of biological role, specifically methylates the pseudouridine at position 1915 (m3Psi1915) in 23S rRNA. This Dichelobacter nodosus (strain VCS1703A) protein is Ribosomal RNA large subunit methyltransferase H.